Reading from the N-terminus, the 303-residue chain is Ribosomal protein L11 methyltransferase (303 aa).

S-adenosyl-L-methionine contacts are provided by Thr144, Gly165, Asp187, and Asn235.

Belongs to the methyltransferase superfamily. PrmA family.

It localises to the cytoplasm. It catalyses the reaction L-lysyl-[protein] + 3 S-adenosyl-L-methionine = N(6),N(6),N(6)-trimethyl-L-lysyl-[protein] + 3 S-adenosyl-L-homocysteine + 3 H(+). Methylates ribosomal protein L11. The polypeptide is Ribosomal protein L11 methyltransferase (Prochlorococcus marinus (strain MIT 9301)).